The following is a 229-amino-acid chain: Lipoprotein-releasing system ATP-binding protein LolD 1 (229 aa).

The region spanning 2–229 (LVVSELSKSY…VRRGRFGITA (228 aa)) is the ABC transporter domain. Residue 38-45 (GPSGSGKT) coordinates ATP.

It belongs to the ABC transporter superfamily. Lipoprotein translocase (TC 3.A.1.125) family. In terms of assembly, the complex is composed of two ATP-binding proteins (LolD) and two transmembrane proteins (LolC and LolE).

It localises to the cell inner membrane. Functionally, part of the ABC transporter complex LolCDE involved in the translocation of mature outer membrane-directed lipoproteins, from the inner membrane to the periplasmic chaperone, LolA. Responsible for the formation of the LolA-lipoprotein complex in an ATP-dependent manner. This chain is Lipoprotein-releasing system ATP-binding protein LolD 1, found in Rhodopirellula baltica (strain DSM 10527 / NCIMB 13988 / SH1).